A 792-amino-acid polypeptide reads, in one-letter code: uncharacterized protein (792 aa).

Tandem repeats lie at residues Asn91–Ile102, Asn103–Ile114, Asn115–Thr126, Asn127–Thr138, Asn139–Ile150, Asn151–Thr162, Asn163–Ile174, Asn175–Thr186, Asn187–Ile198, Asn199–Thr210, Asn211–Thr222, Asn223–Thr234, Asn235–Thr246, Asn247–Thr258, Asn259–Thr270, Asn271–Ile282, Asn283–Ile294, Asn295–Thr306, Asn307–Thr318, Asp319–Ile330, Asn331–Thr342, Asn343–Thr354, Asp355–Thr366, Asn367–Thr378, and Asn379–Thr390. Residues Asn91–Thr390 are 25 X 12 AA tandem repeat of N-[SV]-[RS]-T-[NS]-A-T-T-T-[AE]-[ST]-[IT]. Residues Ser113–Lys417 are disordered. Positions Thr118 to Ser393 are enriched in low complexity. Over residues Ala394 to Lys417 the composition is skewed to basic and acidic residues.

This is an uncharacterized protein from Saccharomyces cerevisiae (strain ATCC 204508 / S288c) (Baker's yeast).